Here is a 152-residue protein sequence, read N- to C-terminus: Phospholipase A2 (152 aa).

A signal peptide spans Met1–Ala20. 8 disulfides stabilise this stretch: Cys39–Cys96, Cys53–Cys142, Cys55–Cys70, Cys69–Cys124, Cys75–Cys149, Cys76–Cys117, Cys85–Cys110, and Cys103–Cys115. Positions 56 and 58 each coordinate Ca(2+). His73 is a catalytic residue. Asp74 is a binding site for Ca(2+). Residue Asp118 is part of the active site.

This sequence belongs to the phospholipase A2 family. As to expression, expressed by the venom gland. Heavily expressed in the venom gland transcriptome.

Its subcellular location is the secreted. It catalyses the reaction a 1,2-diacyl-sn-glycero-3-phosphocholine + H2O = a 1-acyl-sn-glycero-3-phosphocholine + a fatty acid + H(+). Its function is as follows. PA2 catalyzes the calcium-dependent hydrolysis of the 2-acyl groups in 3-sn-phosphoglycerides. The protein is Phospholipase A2 of Meiacanthus atrodorsalis (Forktail blenny).